Here is a 201-residue protein sequence, read N- to C-terminus: Large ribosomal subunit protein uL4 (201 aa).

The disordered stretch occupies residues 45–73; the sequence is AQKTRAEVTGSGKKPWRQKGTGRARAGSV.

Belongs to the universal ribosomal protein uL4 family. Part of the 50S ribosomal subunit.

Its function is as follows. One of the primary rRNA binding proteins, this protein initially binds near the 5'-end of the 23S rRNA. It is important during the early stages of 50S assembly. It makes multiple contacts with different domains of the 23S rRNA in the assembled 50S subunit and ribosome. Forms part of the polypeptide exit tunnel. In Yersinia pseudotuberculosis serotype O:1b (strain IP 31758), this protein is Large ribosomal subunit protein uL4.